Here is a 119-residue protein sequence, read N- to C-terminus: Ribonuclease P protein component (119 aa).

It belongs to the RnpA family. In terms of assembly, consists of a catalytic RNA component (M1 or rnpB) and a protein subunit.

It carries out the reaction Endonucleolytic cleavage of RNA, removing 5'-extranucleotides from tRNA precursor.. Functionally, RNaseP catalyzes the removal of the 5'-leader sequence from pre-tRNA to produce the mature 5'-terminus. It can also cleave other RNA substrates such as 4.5S RNA. The protein component plays an auxiliary but essential role in vivo by binding to the 5'-leader sequence and broadening the substrate specificity of the ribozyme. This is Ribonuclease P protein component from Listeria monocytogenes serotype 4b (strain CLIP80459).